We begin with the raw amino-acid sequence, 250 residues long: Triosephosphate isomerase (250 aa).

9-11 (NWK) contributes to the substrate binding site. His-94 (electrophile) is an active-site residue. The active-site Proton acceptor is Glu-166. Substrate-binding positions include Gly-172, Ser-212, and 233 to 234 (GG).

It belongs to the triosephosphate isomerase family. Homodimer.

The protein resides in the cytoplasm. The catalysed reaction is D-glyceraldehyde 3-phosphate = dihydroxyacetone phosphate. Its pathway is carbohydrate biosynthesis; gluconeogenesis. The protein operates within carbohydrate degradation; glycolysis; D-glyceraldehyde 3-phosphate from glycerone phosphate: step 1/1. Involved in the gluconeogenesis. Catalyzes stereospecifically the conversion of dihydroxyacetone phosphate (DHAP) to D-glyceraldehyde-3-phosphate (G3P). The protein is Triosephosphate isomerase of Treponema denticola (strain ATCC 35405 / DSM 14222 / CIP 103919 / JCM 8153 / KCTC 15104).